The chain runs to 240 residues: Biotin--[acetyl-CoA-carboxylase] ligase (240 aa).

Residues 1 to 176 form the BPL/LPL catalytic domain; the sequence is MLARTDSTNA…AFARWQAQLD (176 aa). Biotin contacts are provided by residues 7-9, Gln-30, 34-36, and Lys-102; these read STN and RGR.

This sequence belongs to the biotin--protein ligase family.

The enzyme catalyses biotin + L-lysyl-[protein] + ATP = N(6)-biotinyl-L-lysyl-[protein] + AMP + diphosphate + H(+). Functionally, activates biotin to form biotinyl-5'-adenylate and transfers the biotin moiety to biotin-accepting proteins. The protein is Biotin--[acetyl-CoA-carboxylase] ligase (birA) of Paracoccus denitrificans.